A 74-amino-acid chain; its full sequence is MPPQSDDKRQAAREVIDILHEISTLLNTNLDRTELSLCVSLIENGVNPDALATVIKDLRTEAGLALRASNESPE.

The protein belongs to the MOZART1 family. In terms of assembly, part of the gamma-tubulin complex.

The protein resides in the cytoplasm. The protein localises to the cytoskeleton. It localises to the microtubule organizing center. It is found in the spindle pole body. Required for gamma-tubulin complex recruitment to the microtubule organizing center (MTOC). This chain is Mitotic-spindle organizing protein 1, found in Emericella nidulans (strain FGSC A4 / ATCC 38163 / CBS 112.46 / NRRL 194 / M139) (Aspergillus nidulans).